A 217-amino-acid polypeptide reads, in one-letter code: Ribosomal RNA small subunit methyltransferase G (217 aa).

S-adenosyl-L-methionine-binding positions include Gly79, Leu84, 130–131 (IE), and Arg145.

Belongs to the methyltransferase superfamily. RNA methyltransferase RsmG family.

The protein resides in the cytoplasm. It catalyses the reaction guanosine(527) in 16S rRNA + S-adenosyl-L-methionine = N(7)-methylguanosine(527) in 16S rRNA + S-adenosyl-L-homocysteine. Specifically methylates the N7 position of guanine in position 527 of 16S rRNA. The chain is Ribosomal RNA small subunit methyltransferase G from Hahella chejuensis (strain KCTC 2396).